The chain runs to 205 residues: Photosystem I assembly protein Ycf4 (205 aa).

Helical transmembrane passes span 23 to 43 (WATVILIGSFGFLLTGISSYI) and 86 to 106 (LMCFYGSLGFLLSIYWWCLIF).

It belongs to the Ycf4 family.

It is found in the plastid. Its subcellular location is the chloroplast thylakoid membrane. In terms of biological role, seems to be required for the assembly of the photosystem I complex. In Tetradesmus obliquus (Green alga), this protein is Photosystem I assembly protein Ycf4.